A 125-amino-acid chain; its full sequence is Interferon-induced transmembrane protein 1 (125 aa).

Over 1–36 (MHKEEHEVAVLGPPPSTILPRSTVINIHSETSVPDH) the chain is Cytoplasmic. A Phosphoserine modification is found at serine 16. Residues 37–57 (VVWSLFNTLFLNWCCLGFIAF) constitute an intramembrane region (helical). 3 S-palmitoyl cysteine lipidation sites follow: cysteine 50, cysteine 51, and cysteine 84. At 58–86 (AYSVKSRDRKMVGDVTGAQAYASTAKCLN) the chain is on the cytoplasmic side. The interaction with CAV1 stretch occupies residues 84–125 (CLNIWALILGILMTIGFILLLVFGSVTVYHIMLQIIQEKRGY). A helical transmembrane segment spans residues 87 to 107 (IWALILGILMTIGFILLLVFG). At 108–125 (SVTVYHIMLQIIQEKRGY) the chain is on the extracellular side.

This sequence belongs to the CD225/Dispanin family. In terms of assembly, interacts with CD81. Part of a complex composed of CD19, CR2/CD21, CD81 and IFITM1/CD225 in the membrane of mature B-cells. Interacts with CAV1; this interaction enhances the ability of CAV1 in inhibiting ERK activation. In terms of processing, palmitoylation on membrane-proximal cysteines controls clustering in membrane compartments and antiviral activity. As to expression, bone (at protein level). Levels greatly elevated in colon cancer, cervical cancer, esophageal cancer and ovarian cancer. Expressed in glioma cell lines.

It is found in the cell membrane. Its subcellular location is the lysosome membrane. Its function is as follows. IFN-induced antiviral protein which inhibits the entry of viruses to the host cell cytoplasm, permitting endocytosis, but preventing subsequent viral fusion and release of viral contents into the cytosol. Active against multiple viruses, including influenza A virus, SARS coronaviruses (SARS-CoV and SARS-CoV-2), Marburg virus (MARV), Ebola virus (EBOV), Dengue virus (DNV), West Nile virus (WNV), human immunodeficiency virus type 1 (HIV-1) and hepatitis C virus (HCV). Can inhibit: influenza virus hemagglutinin protein-mediated viral entry, MARV and EBOV GP1,2-mediated viral entry and SARS-CoV and SARS-CoV-2 S protein-mediated viral entry. Also implicated in cell adhesion and control of cell growth and migration. Inhibits SARS-CoV-2 S protein-mediated syncytia formation. Plays a key role in the antiproliferative action of IFN-gamma either by inhibiting the ERK activation or by arresting cell growth in G1 phase in a p53-dependent manner. Acts as a positive regulator of osteoblast differentiation. In hepatocytes, IFITM proteins act in a coordinated manner to restrict HCV infection by targeting the endocytosed HCV virion for lysosomal degradation. IFITM2 and IFITM3 display anti-HCV activity that may complement the anti-HCV activity of IFITM1 by inhibiting the late stages of HCV entry, possibly in a coordinated manner by trapping the virion in the endosomal pathway and targeting it for degradation at the lysosome. The protein is Interferon-induced transmembrane protein 1 of Homo sapiens (Human).